A 3354-amino-acid polypeptide reads, in one-letter code: Cadherin-23 (3354 aa).

The signal sequence occupies residues 1 to 23; the sequence is MRYSLVTCYAVLWLLMLVPGSWG. Residues 24–3064 lie on the Extracellular side of the membrane; the sequence is QVNRLPFFTN…SVQLPDDMSA (3041 aa). Cadherin domains are found at residues 34 to 132, 133 to 236, 237 to 348, 349 to 460, 461 to 561, 562 to 671, 672 to 784, 779 to 890, 891 to 995, 996 to 1102, 1103 to 1208, 1210 to 1313, 1314 to 1418, 1420 to 1527, 1529 to 1634, 1635 to 1744, 1745 to 1851, 1852 to 1959, 1960 to 2069, 2070 to 2174, 2175 to 2293, 2297 to 2402, 2403 to 2509, 2510 to 2611, 2614 to 2722, 2729 to 2846, and 2847 to 2975; these read HFFD…APTF, HNQP…DPIF, INLP…APEF, NSSE…RPIF, SQPL…VPTF, QKDA…PPTF, SKPA…APYY, KDAP…DPTF, RNLP…TPTF, FPAV…RPIF, LQSS…APVF, QQQY…AVQF, SNAS…SPRF, FTSD…PPVI, SPFG…APVF, QQPH…VPTF, PRDY…DPVL, LNLP…HPLF, TEGT…WPTF, SPPT…RPEF, LNPI…TPQF, GITY…NPIF, DQPS…RPQF, SKPQ…RPVF, PPNG…EPLF, SPQY…PPRF, and TKAE…EEEF. 2 N-linked (GlcNAc...) asparagine glycosylation sites follow: asparagine 155 and asparagine 206. N-linked (GlcNAc...) asparagine glycosylation is found at asparagine 349, asparagine 393, asparagine 434, asparagine 466, asparagine 472, asparagine 602, asparagine 694, asparagine 765, asparagine 810, asparagine 827, asparagine 941, asparagine 1001, asparagine 1018, asparagine 1171, asparagine 1282, asparagine 1315, asparagine 1473, asparagine 1534, asparagine 1651, asparagine 1667, asparagine 1818, asparagine 1857, asparagine 1889, asparagine 1902, asparagine 2014, asparagine 2050, asparagine 2129, asparagine 2168, asparagine 2195, asparagine 2263, asparagine 2357, and asparagine 2369. N-linked (GlcNAc...) asparagine glycosylation is found at asparagine 2578, asparagine 2616, asparagine 2749, asparagine 2808, asparagine 2877, asparagine 2896, asparagine 2941, and asparagine 2981. The chain crosses the membrane as a helical span at residues 3065–3085; that stretch reads LQMAIIVLAILLFLAAMLFVL. Residues 3086–3354 are Cytoplasmic-facing; the sequence is MNWYYRTIHK…MESPLEITEL (269 aa).

Interacts with USH1C and USH1G. antiparallel heterodimer with PCDH15. Isoform C1: Interacts with CAMSAP3; leading to inhibit CAMSAP3 ability to induce microtubule bundle formation. In terms of tissue distribution, in adult animals relatively high levels of expression are found in testis, skeletal muscle, heart, eye and thymus, and lower expression in kidney, lung and brain. Found in the sensory hair cells of the inner ear.

It localises to the cell membrane. In terms of biological role, cadherins are calcium-dependent cell adhesion proteins. They preferentially interact with themselves in a homophilic manner in connecting cells. CDH23 is required for establishing and/or maintaining the proper organization of the stereocilia bundle of hair cells in the cochlea and the vestibule during late embryonic/early postnatal development. It is part of the functional network formed by USH1C, USH1G, CDH23 and MYO7A that mediates mechanotransduction in cochlear hair cells. Required for normal hearing. This chain is Cadherin-23 (Cdh23), found in Mus musculus (Mouse).